The following is a 277-amino-acid chain: Eukaryotic translation initiation factor 3 subunit J (277 aa).

Positions 1–80 (MSWDDEDFAV…PAATKNTMLD (80 aa)) are disordered. Residues 23–43 (WDDEFAENDDEPVLESWEDEE) are compositionally biased toward acidic residues. Over residues 50 to 75 (KAAAAAAAKAPKKASPSPAATPAATK) the composition is skewed to low complexity. The stretch at 199-230 (TVENIRQTIATLNVLMKDKEREERQARLAKVK) forms a coiled coil. Residues 257–277 (DNDFDLGGNDNFDDFGEDDFM) form a disordered region. The span at 267–277 (NFDDFGEDDFM) shows a compositional bias: acidic residues.

This sequence belongs to the eIF-3 subunit J family. In terms of assembly, component of the eukaryotic translation initiation factor 3 (eIF-3) complex.

Its subcellular location is the cytoplasm. In terms of biological role, component of the eukaryotic translation initiation factor 3 (eIF-3) complex, which is involved in protein synthesis of a specialized repertoire of mRNAs and, together with other initiation factors, stimulates binding of mRNA and methionyl-tRNAi to the 40S ribosome. The eIF-3 complex specifically targets and initiates translation of a subset of mRNAs involved in cell proliferation. This Kluyveromyces lactis (strain ATCC 8585 / CBS 2359 / DSM 70799 / NBRC 1267 / NRRL Y-1140 / WM37) (Yeast) protein is Eukaryotic translation initiation factor 3 subunit J.